The sequence spans 397 residues: Elongation factor Tu (397 aa).

In terms of domain architecture, tr-type G spans 10–206; sequence KPHVNIGTIG…AVDTSIPQPE (197 aa). The tract at residues 19-26 is G1; the sequence is GHIDHGKT. 19–26 contacts GTP; it reads GHIDHGKT. A Mg(2+)-binding site is contributed by Thr26. A G2 region spans residues 62–66; the sequence is GITIS. The segment at 83–86 is G3; the sequence is DCPG. GTP is bound by residues 83 to 87 and 138 to 141; these read DCPGH and NKSD. Residues 138 to 141 are G4; sequence NKSD. Residues 176–178 are G5; the sequence is SAL.

The protein belongs to the TRAFAC class translation factor GTPase superfamily. Classic translation factor GTPase family. EF-Tu/EF-1A subfamily. Monomer.

It localises to the cytoplasm. It catalyses the reaction GTP + H2O = GDP + phosphate + H(+). In terms of biological role, GTP hydrolase that promotes the GTP-dependent binding of aminoacyl-tRNA to the A-site of ribosomes during protein biosynthesis. This Salinispora tropica (strain ATCC BAA-916 / DSM 44818 / JCM 13857 / NBRC 105044 / CNB-440) protein is Elongation factor Tu.